Consider the following 133-residue polypeptide: MAANDTISDMLTRIRNSCMAQHTTTKVPATKMTRSIAKVLKDEGFIGEFEQEGEGIKKYLVIFLKYKGKNRQPIIRYLKRVSKPGLRVYKNRKELPRVLGGIGIAIISTSSGIMTDREARKRGIGGEVLCYVW.

Belongs to the universal ribosomal protein uS8 family. As to quaternary structure, part of the 30S ribosomal subunit. Contacts proteins S5 and S12.

Functionally, one of the primary rRNA binding proteins, it binds directly to 16S rRNA central domain where it helps coordinate assembly of the platform of the 30S subunit. This Trichodesmium erythraeum (strain IMS101) protein is Small ribosomal subunit protein uS8.